The following is a 121-amino-acid chain: MDQLIQLVEATQAGVETPDIYPGDSVRIQLRVIEGEKERLQAFDGVVISDRGAGTNKTITVRKISHGVGVERIIPINSPNVESVTVLKHGKARRSKLFYLRKRTGKAALKVKERKVAEKAS.

The protein belongs to the bacterial ribosomal protein bL19 family.

Its function is as follows. This protein is located at the 30S-50S ribosomal subunit interface and may play a role in the structure and function of the aminoacyl-tRNA binding site. The protein is Large ribosomal subunit protein bL19 of Chlorobium phaeovibrioides (strain DSM 265 / 1930) (Prosthecochloris vibrioformis (strain DSM 265)).